We begin with the raw amino-acid sequence, 144 residues long: Small ribosomal subunit protein uS11c (144 aa).

The protein belongs to the universal ribosomal protein uS11 family. As to quaternary structure, part of the 30S ribosomal subunit.

The protein resides in the plastid. Its subcellular location is the chloroplast. This Oenothera biennis (German evening primrose) protein is Small ribosomal subunit protein uS11c.